The following is a 1207-amino-acid chain: Brassinosteroid LRR receptor kinase (1207 aa).

The first 34 residues, 1 to 34, serve as a signal peptide directing secretion; it reads MKAHKTVFNQHPLSLNKLFFVLLLIFFLPPASPA. Positions 71–78 match the Cys pair 1 motif; it reads CSFTGVSC. LRR repeat units follow at residues 109–131, 135–157, 161–181, 186–207, 213–234, 235–257, 258–280, 282–304, 305–325, 329–350, 353–374, 378–400, 402–423, 428–450, 452–474, 476–499, 500–523, 524–547, 548–570, and 572–594; these read NLES…AKSQ, TLDS…SSFG, NLKS…EMLK, SLQV…PWVS, ELEF…LDFK, NLSY…KDCS, NLQH…LSSC, KLSF…PSES, LQYL…QLAD, TVVE…SLGE, SLEL…DTLS, NIKT…FSNL, KLET…GICK, NLKV…LSNC, QLVS…LGSL, KLKD…MYLQ, ALEN…SNCT, KLNW…GRLS, NLAI…LGNC, and SLIW…LFKQ. N-linked (GlcNAc...) asparagine glycosylation is present at Asn-119. N-linked (GlcNAc...) asparagine glycans are attached at residues Asn-166 and Asn-196. Asn-235 and Asn-245 each carry an N-linked (GlcNAc...) asparagine glycan. An N-linked (GlcNAc...) asparagine glycan is attached at Asn-287. N-linked (GlcNAc...) asparagine glycans are attached at residues Asn-339 and Asn-363. Asn-412 and Asn-449 each carry an N-linked (GlcNAc...) asparagine glycan. N-linked (GlcNAc...) asparagine glycosylation is present at Asn-521. N-linked (GlcNAc...) asparagine glycosylation is found at Asn-556, Asn-584, Asn-646, and Asn-662. LRR repeat units lie at residues 664–686, 688–711, 712–735, and 736–758; these read SMIF…LGAM, YLSI…GGLK, NVAI…TSLT, and LLGE…APFD. N-linked (GlcNAc...) asparagine glycosylation is found at Asn-724, Asn-746, and Asn-767. Residues 771–779 carry the Cys pair 2 motif; that stretch reads CGYPLPIPC. Residues 803-823 traverse the membrane as a helical segment; sequence SVAMGLLFSLFCIFGLIIVAI. The region spanning 888–1163 is the Protein kinase domain; the sequence is FHNDSLVGSG…IQVMAMFKEI (276 aa). Residues 894-902 and Lys-916 each bind ATP; that span reads VGSGGFGDV. Residue Asp-1014 is the Proton acceptor of the active site.

The protein belongs to the protein kinase superfamily. Ser/Thr protein kinase family.

Its subcellular location is the cell membrane. It carries out the reaction L-seryl-[protein] + ATP = O-phospho-L-seryl-[protein] + ADP + H(+). The catalysed reaction is L-threonyl-[protein] + ATP = O-phospho-L-threonyl-[protein] + ADP + H(+). Receptor with a serine/threonine-protein kinase activity. Regulates, in response to brassinosteroid binding, a signaling cascade involved in plant development, including expression of light- and stress-regulated genes, promotion of cell elongation, normal leaf and chloroplast senescence, and flowering. May be involved in a feedback regulation of brassinosteroid biosynthesis. May be also involved in the perception of systemin, a peptide hormone responsible for the systemic activation of defense genes in leaves of wounded plants. The polypeptide is Brassinosteroid LRR receptor kinase (CURL3) (Solanum lycopersicum (Tomato)).